A 253-amino-acid polypeptide reads, in one-letter code: LexA repressor (253 aa).

The H-T-H motif DNA-binding region spans 26-46; sequence FDEMKDALNLRSKSGIHRLIS. The tract at residues 73 to 97 is disordered; that stretch reads MPAATGKPPLAESGPPPVTAPATDE. Residues S174 and K212 each act as for autocatalytic cleavage activity in the active site.

Belongs to the peptidase S24 family. Homodimer.

It catalyses the reaction Hydrolysis of Ala-|-Gly bond in repressor LexA.. Functionally, represses a number of genes involved in the response to DNA damage (SOS response), including recA and lexA. In the presence of single-stranded DNA, RecA interacts with LexA causing an autocatalytic cleavage which disrupts the DNA-binding part of LexA, leading to derepression of the SOS regulon and eventually DNA repair. This is LexA repressor from Gluconacetobacter diazotrophicus (strain ATCC 49037 / DSM 5601 / CCUG 37298 / CIP 103539 / LMG 7603 / PAl5).